We begin with the raw amino-acid sequence, 510 residues long: Maturase K (510 aa).

Belongs to the intron maturase 2 family. MatK subfamily.

The protein resides in the plastid. It localises to the chloroplast. In terms of biological role, usually encoded in the trnK tRNA gene intron. Probably assists in splicing its own and other chloroplast group II introns. The polypeptide is Maturase K (Spirodela intermedia (Intermediate duckweed)).